We begin with the raw amino-acid sequence, 353 residues long: Putative permease PerM (353 aa).

Transmembrane regions (helical) follow at residues 19–39 (IALL…SGLL), 72–92 (IVLV…LPIA), 156–176 (LVGL…VFFL), 217–237 (VLEM…FGLN), 240–260 (LLLA…AFVV), 281–301 (CFAV…PVLF), and 310–330 (LVII…GVFF).

This sequence belongs to the autoinducer-2 exporter (AI-2E) (TC 2.A.86) family.

It is found in the cell membrane. In Escherichia coli O157:H7, this protein is Putative permease PerM (perM).